Reading from the N-terminus, the 98-residue chain is NADH-ubiquinone oxidoreductase chain 4L (98 aa).

3 helical membrane-spanning segments follow: residues 2–22 (PSIF…MLIF), 37–57 (MLSM…TMSF), and 61–81 (ILLL…LVTV).

Belongs to the complex I subunit 4L family. As to quaternary structure, core subunit of respiratory chain NADH dehydrogenase (Complex I) which is composed of 45 different subunits.

It localises to the mitochondrion inner membrane. It catalyses the reaction a ubiquinone + NADH + 5 H(+)(in) = a ubiquinol + NAD(+) + 4 H(+)(out). Its function is as follows. Core subunit of the mitochondrial membrane respiratory chain NADH dehydrogenase (Complex I) which catalyzes electron transfer from NADH through the respiratory chain, using ubiquinone as an electron acceptor. Part of the enzyme membrane arm which is embedded in the lipid bilayer and involved in proton translocation. The chain is NADH-ubiquinone oxidoreductase chain 4L (MT-ND4L) from Varecia rubra (Red ruffed lemur).